A 356-amino-acid polypeptide reads, in one-letter code: MQKDALNNVRITDEQVLMTPEQLKAAFPLSLAQEAQIAQSRGIISDIIAGRDPRLLVVCGPCSIHDPETALEYARRFKALAAEVSDSLYLVMRVYFEKPRTTVGWKGLINDPHMDGSFDVEAGLKIARQLLVELVNMGLPLATEALDPNSPQYLGDLFSWSAIGARTTESQTHREMASGLSMPVGFKNGTDGSLATAINAMRAAAQPHRFVGINQAGQVALLQTQGNPHGHVILRGGKAPNYSPADVAQCEKEMEQAGLRPSLMVDCSHGNSNKDYRRQPAVAESVVAQIKDGNRSIIGLMIESNIHEGNQSSEQPRSEMKYGVSVTDACISWEMTDALLREIHKDLSGQLAVRVA.

It belongs to the class-I DAHP synthase family.

The enzyme catalyses D-erythrose 4-phosphate + phosphoenolpyruvate + H2O = 7-phospho-2-dehydro-3-deoxy-D-arabino-heptonate + phosphate. It participates in metabolic intermediate biosynthesis; chorismate biosynthesis; chorismate from D-erythrose 4-phosphate and phosphoenolpyruvate: step 1/7. Its function is as follows. Stereospecific condensation of phosphoenolpyruvate (PEP) and D-erythrose-4-phosphate (E4P) giving rise to 3-deoxy-D-arabino-heptulosonate-7-phosphate (DAHP). The chain is Phospho-2-dehydro-3-deoxyheptonate aldolase, Tyr-sensitive (aroF) from Salmonella typhi.